Consider the following 305-residue polypeptide: UDP-3-O-acyl-N-acetylglucosamine deacetylase (305 aa).

Residues His79, His238, and Asp242 each contribute to the Zn(2+) site. His265 acts as the Proton donor in catalysis.

The protein belongs to the LpxC family. Zn(2+) is required as a cofactor.

The enzyme catalyses a UDP-3-O-[(3R)-3-hydroxyacyl]-N-acetyl-alpha-D-glucosamine + H2O = a UDP-3-O-[(3R)-3-hydroxyacyl]-alpha-D-glucosamine + acetate. It participates in glycolipid biosynthesis; lipid IV(A) biosynthesis; lipid IV(A) from (3R)-3-hydroxytetradecanoyl-[acyl-carrier-protein] and UDP-N-acetyl-alpha-D-glucosamine: step 2/6. Its function is as follows. Catalyzes the hydrolysis of UDP-3-O-myristoyl-N-acetylglucosamine to form UDP-3-O-myristoylglucosamine and acetate, the committed step in lipid A biosynthesis. This chain is UDP-3-O-acyl-N-acetylglucosamine deacetylase, found in Actinobacillus succinogenes (strain ATCC 55618 / DSM 22257 / CCUG 43843 / 130Z).